Reading from the N-terminus, the 174-residue chain is Methylated protein MJ0556 (174 aa).

CBS domains follow at residues 28 to 87 and 91 to 156; these read MISG…YLNV and MLKN…IIKE.

Methylated at an undetermined residue between Ser-2 and Asp-26.

This chain is Methylated protein MJ0556, found in Methanocaldococcus jannaschii (strain ATCC 43067 / DSM 2661 / JAL-1 / JCM 10045 / NBRC 100440) (Methanococcus jannaschii).